Reading from the N-terminus, the 345-residue chain is Phosphoribosylformylglycinamidine cyclo-ligase (345 aa).

This sequence belongs to the AIR synthase family.

The protein resides in the cytoplasm. The catalysed reaction is 2-formamido-N(1)-(5-O-phospho-beta-D-ribosyl)acetamidine + ATP = 5-amino-1-(5-phospho-beta-D-ribosyl)imidazole + ADP + phosphate + H(+). Its pathway is purine metabolism; IMP biosynthesis via de novo pathway; 5-amino-1-(5-phospho-D-ribosyl)imidazole from N(2)-formyl-N(1)-(5-phospho-D-ribosyl)glycinamide: step 2/2. This Shigella dysenteriae serotype 1 (strain Sd197) protein is Phosphoribosylformylglycinamidine cyclo-ligase.